Consider the following 372-residue polypeptide: Silphinene synthase peniA (372 aa).

Mg(2+) contacts are provided by Asp-116, Glu-121, Asn-263, Ser-267, and Glu-271. Residues 116 to 121 carry the DDXXE motif motif; the sequence is DDQFDE.

The protein belongs to the terpene synthase family. The cofactor is Mg(2+).

The catalysed reaction is (2E,6E)-farnesyl diphosphate = silphinene + diphosphate. It participates in secondary metabolite biosynthesis; terpenoid biosynthesis. Its function is as follows. Sesquiterpene cyclase; part of the gene cluster that mediates the biosynthesis of penifulvin A, a potent insecticidal sesquiterpene that features a [5.5.5.6]dioxafenestrane ring. Within the pathway, peniA catalyzes the first step and generates the angular triquinane scaffold silphinene via cyclization of the linear farnesyl pyrophosphate (FPP). The cytochrome P450 monooxygenase peniB and the flavin-dependent monooxygenase peniC then catalyze a series of oxidation reactions to transform silphinene into penifulvin A. The polypeptide is Silphinene synthase peniA (Penicillium patulum (Penicillium griseofulvum)).